A 32-amino-acid chain; its full sequence is AFCKYNGEQCTSDGQCCNGRCRTAFMGKICMG.

Disulfide bonds link Cys3–Cys17, Cys10–Cys21, and Cys16–Cys30.

This sequence belongs to the neurotoxin 17 (21C2) family. Expressed by the venom gland.

It localises to the secreted. May act as a neurotoxin. This chain is U3-ctenitoxin-Pk1a, found in Phoneutria keyserlingi (Brazilian wandering spider).